Here is a 132-residue protein sequence, read N- to C-terminus: Protein NrdI (132 aa).

This sequence belongs to the NrdI family.

Probably involved in ribonucleotide reductase function. This chain is Protein NrdI, found in Staphylococcus haemolyticus (strain JCSC1435).